We begin with the raw amino-acid sequence, 501 residues long: Phosphatase and actin regulator 1 (501 aa).

The RPEL 1 repeat unit spans residues 1 to 18 (MRQSREELIKRGVLKEIF). 2 disordered regions span residues 21 to 46 (DGEL…QVLS) and 295 to 329 (DNKE…EDNS). Over residues 36–46 (GQPLGSGQVLS) the composition is skewed to low complexity. Residues 295 to 304 (DNKENVPHEA) show a composition bias toward basic and acidic residues. Residues 317–328 (EEEEEEDEDEDN) are compositionally biased toward acidic residues. 3 RPEL repeats span residues 343-368 (DSLA…PMQT), 381-406 (TKLT…KPRN), and 419-444 (RRLT…IRFS). Residues 382-415 (KLTRRLSQRPTAEELEQRNILKPRNEQEEQEEKR) form a disordered region. The segment covering 392–415 (TAEELEQRNILKPRNEQEEQEEKR) has biased composition (basic and acidic residues).

The protein belongs to the phosphatase and actin regulator family. Interacts (via RPEL repeats) with ACTA1. As to expression, expressed in the gizzard, and in neurons from central and peripheral nervous systems.

The protein resides in the cytoplasm. It is found in the synapse. The protein localises to the nucleus. In terms of biological role, binds actin monomers (G actin) and plays a role in the reorganization of the actin cytoskeleton and in formation of actin stress fibers. This is Phosphatase and actin regulator 1 (PHACTR1) from Gallus gallus (Chicken).